The sequence spans 127 residues: Large ribosomal subunit protein eL8 (127 aa).

This sequence belongs to the eukaryotic ribosomal protein eL8 family. In terms of assembly, part of the 50S ribosomal subunit. Probably part of the RNase P complex.

Its subcellular location is the cytoplasm. In terms of biological role, multifunctional RNA-binding protein that recognizes the K-turn motif in ribosomal RNA, the RNA component of RNase P, box H/ACA, box C/D and box C'/D' sRNAs. The polypeptide is Large ribosomal subunit protein eL8 (Saccharolobus islandicus (strain Y.N.15.51 / Yellowstone #2) (Sulfolobus islandicus)).